Consider the following 273-residue polypeptide: Fos-related antigen 1 (273 aa).

Disordered regions lie at residues 1 to 46 (MYRD…IDSS) and 60 to 114 (GPTG…RRER). Low complexity predominate over residues 7 to 35 (EPGPSSGAGSPYGRPAQPPQAQAQTAQQQ). The 64-residue stretch at 105-168 (EERRRVRRER…ERLELVLEAH (64 aa)) folds into the bZIP domain. The basic motif stretch occupies residues 107 to 127 (RRRVRRERNKLAAAKCRNRRK). The tract at residues 133-161 (LQAETDKLEDEKSGLQREIEELQKQKERL) is leucine-zipper. Residues 169–182 (RPICKIPEGDKKDP) are compositionally biased toward basic and acidic residues. The disordered stretch occupies residues 169-273 (RPICKIPEGD…PLGSPTLLAL (105 aa)). Low complexity-rich tracts occupy residues 217–235 (LHTPTLMTTPSLTPFTPSL) and 254–273 (SSSSGDPSSDPLGSPTLLAL). Position 267 is a phosphoserine (Ser267).

The protein belongs to the bZIP family. Fos subfamily. Heterodimer. Interacts with the BAF multiprotein chromatin-remodeling complex subunits SMARCB1 and SMARCD1. Interacts with ARID1A and JUN.

The protein resides in the nucleus. This chain is Fos-related antigen 1 (Fosl1), found in Mus musculus (Mouse).